Reading from the N-terminus, the 252-residue chain is Coenzyme F420:L-glutamate ligase (252 aa).

GTP-binding positions include Val-12 to Glu-15, His-44 to Thr-45, and Lys-49. Asp-114 contacts a divalent metal cation. Asn-117 provides a ligand contact to GTP. Positions 155, 156, and 213 each coordinate a divalent metal cation. A GTP-binding site is contributed by Met-211 to Thr-218.

It belongs to the CofE family. Homodimer. It depends on Mg(2+) as a cofactor. Mn(2+) serves as cofactor. K(+) is required as a cofactor.

It carries out the reaction oxidized coenzyme F420-0 + GTP + L-glutamate = oxidized coenzyme F420-1 + GDP + phosphate + H(+). The enzyme catalyses oxidized coenzyme F420-1 + GTP + L-glutamate = oxidized coenzyme F420-2 + GDP + phosphate + H(+). The protein operates within cofactor biosynthesis; coenzyme F420 biosynthesis. Catalyzes the GTP-dependent successive addition of two or more gamma-linked L-glutamates to the L-lactyl phosphodiester of 7,8-didemethyl-8-hydroxy-5-deazariboflavin (F420-0) to form coenzyme F420-0-glutamyl-glutamate (F420-2) or polyglutamated F420 derivatives. This chain is Coenzyme F420:L-glutamate ligase, found in Methanopyrus kandleri (strain AV19 / DSM 6324 / JCM 9639 / NBRC 100938).